A 300-amino-acid chain; its full sequence is Porphobilinogen deaminase (300 aa).

Cysteine 239 bears the S-(dipyrrolylmethanemethyl)cysteine mark.

This sequence belongs to the HMBS family. As to quaternary structure, monomer. The cofactor is dipyrromethane.

It carries out the reaction 4 porphobilinogen + H2O = hydroxymethylbilane + 4 NH4(+). It functions in the pathway porphyrin-containing compound metabolism; protoporphyrin-IX biosynthesis; coproporphyrinogen-III from 5-aminolevulinate: step 2/4. Its function is as follows. Tetrapolymerization of the monopyrrole PBG into the hydroxymethylbilane pre-uroporphyrinogen in several discrete steps. This Francisella tularensis subsp. holarctica (strain OSU18) protein is Porphobilinogen deaminase.